The following is a 464-amino-acid chain: Argininosuccinate lyase (464 aa).

This sequence belongs to the lyase 1 family. Argininosuccinate lyase subfamily.

The protein localises to the cytoplasm. The catalysed reaction is 2-(N(omega)-L-arginino)succinate = fumarate + L-arginine. Its pathway is amino-acid biosynthesis; L-arginine biosynthesis; L-arginine from L-ornithine and carbamoyl phosphate: step 3/3. This chain is Argininosuccinate lyase, found in Pseudomonas syringae pv. tomato (strain ATCC BAA-871 / DC3000).